The sequence spans 686 residues: L-type lectin-domain containing receptor kinase VII.1 (686 aa).

Positions 1–20 (MKALLFLLTLFLILPNPISA) are cleaved as a signal peptide. Residues 21-256 (IDFIFNGFND…SHKILAWSFS (236 aa)) are legume-lectin like. The Extracellular segment spans residues 21–286 (IDFIFNGFND…PKDSIVKAKW (266 aa)). Residues asparagine 29, asparagine 34, asparagine 52, asparagine 64, asparagine 111, asparagine 123, asparagine 168, asparagine 203, asparagine 224, and asparagine 259 are each glycosylated (N-linked (GlcNAc...) asparagine). A helical membrane pass occupies residues 287–307 (FVFVLVLICFLVVALVGLVLF). The Cytoplasmic segment spans residues 308-686 (AVVRKRLERA…SWNSSILEGR (379 aa)). The 282-residue stretch at 347–628 (FDEKNVIGIG…VFEGDKAEIF (282 aa)) folds into the Protein kinase domain. ATP is bound by residues 353 to 361 (IGIGGNGKV) and lysine 376. Aspartate 475 functions as the Proton acceptor in the catalytic mechanism.

This sequence in the C-terminal section; belongs to the protein kinase superfamily. Ser/Thr protein kinase family. It in the N-terminal section; belongs to the leguminous lectin family.

Its subcellular location is the cell membrane. It catalyses the reaction L-seryl-[protein] + ATP = O-phospho-L-seryl-[protein] + ADP + H(+). The enzyme catalyses L-threonyl-[protein] + ATP = O-phospho-L-threonyl-[protein] + ADP + H(+). The polypeptide is L-type lectin-domain containing receptor kinase VII.1 (LECRK71) (Arabidopsis thaliana (Mouse-ear cress)).